A 429-amino-acid chain; its full sequence is MSILIENVMIVTMDEEQDVIKEGYILIKEDKIKEVNLGAYLGNKENLYIINGEGRCAIPGLVNAHTHAGMTIFRGYGEGLPLMRWLNEKIWPIESKLKGEHVKIATELAALEMLRSGTTCFNDMYFYEEQVVKVAKEFNIRGIIGVSIMGDSWEHQLKEAIDIDKKIKEDKSGLLDSMIAPHSPYTLSKEALESIGKEAKLQNKNIHIHISETQDEVNIIKEKYNKTPCEFLQSVGIFNSKVAAAHCVYLTDEDMNILKQNGTSVIYNPQSNMKLASGIAKIAEMIDMDINVCLGTDGTSSNNNLNMIEEMETGTILQKLYYKDATKLSAKKALEMATYNGAKALINNKKLGKIKKDYLADIALLDLNKPNMLPVNDIHSNIVFSANGSEIDYVIVNGSVVMEKGEFKHIDEEKVLYNFKEMCKDIFNN.

Zn(2+) is bound by residues histidine 65 and histidine 67. Residues glutamate 94 and histidine 182 each coordinate substrate. Histidine 209 is a Zn(2+) binding site. Residues glutamate 212 and aspartate 297 each coordinate substrate. A Zn(2+)-binding site is contributed by aspartate 297.

It belongs to the metallo-dependent hydrolases superfamily. MTA/SAH deaminase family. Requires Zn(2+) as cofactor.

It catalyses the reaction S-adenosyl-L-homocysteine + H2O + H(+) = S-inosyl-L-homocysteine + NH4(+). It carries out the reaction S-methyl-5'-thioadenosine + H2O + H(+) = S-methyl-5'-thioinosine + NH4(+). Catalyzes the deamination of 5-methylthioadenosine and S-adenosyl-L-homocysteine into 5-methylthioinosine and S-inosyl-L-homocysteine, respectively. Is also able to deaminate adenosine. The sequence is that of 5-methylthioadenosine/S-adenosylhomocysteine deaminase from Clostridium tetani (strain Massachusetts / E88).